A 137-amino-acid chain; its full sequence is MTQRTLVLLKPDAVRRGLIGEIVGRIERKADWRITALELRTLDHGTLEQHYGEHKGRPFYEPLMEFMQSGPVVALVAEGERVIEGVRTLAGPTDPIAAAPGSIRGDFGTITRENLIHASDSEESAERELKLFFPGLS.

ATP-binding residues include lysine 10, phenylalanine 59, arginine 87, threonine 93, arginine 104, and asparagine 114. Histidine 117 functions as the Pros-phosphohistidine intermediate in the catalytic mechanism.

It belongs to the NDK family. In terms of assembly, homotetramer. Requires Mg(2+) as cofactor.

It is found in the cytoplasm. The catalysed reaction is a 2'-deoxyribonucleoside 5'-diphosphate + ATP = a 2'-deoxyribonucleoside 5'-triphosphate + ADP. The enzyme catalyses a ribonucleoside 5'-diphosphate + ATP = a ribonucleoside 5'-triphosphate + ADP. In terms of biological role, major role in the synthesis of nucleoside triphosphates other than ATP. The ATP gamma phosphate is transferred to the NDP beta phosphate via a ping-pong mechanism, using a phosphorylated active-site intermediate. This is Nucleoside diphosphate kinase from Streptomyces griseus subsp. griseus (strain JCM 4626 / CBS 651.72 / NBRC 13350 / KCC S-0626 / ISP 5235).